The following is a 303-amino-acid chain: Trans-aconitate 2-methyltransferase (303 aa).

Residues 271–303 (EGSGGSGGSGGSAGSAGCAGSGGSVGPAGEAGR) are disordered. Over residues 272-303 (GSGGSGGSGGSAGSAGCAGSGGSVGPAGEAGR) the composition is skewed to gly residues.

The protein belongs to the methyltransferase superfamily. Tam family.

The protein resides in the cytoplasm. The enzyme catalyses trans-aconitate + S-adenosyl-L-methionine = (E)-3-(methoxycarbonyl)pent-2-enedioate + S-adenosyl-L-homocysteine. In terms of biological role, catalyzes the S-adenosylmethionine monomethyl esterification of trans-aconitate. This chain is Trans-aconitate 2-methyltransferase, found in Streptomyces coelicolor (strain ATCC BAA-471 / A3(2) / M145).